A 377-amino-acid chain; its full sequence is MDLNINKTTPVLSDPTTPVSKTRLGSSFPSGRFMMNSRKKIPKLDDVRSNGWLDAMISSSPPRKRLVKDFNIEIAPEDDFSQRAWMLKYPSAITSFAHIAAQAKNKKIAVFLDYDGTLSPIVDDPDRAIMSDAMRAAVKDVAKYFPTAIISGRSRDKVYQLVGLTELYYAGSHGMDIMTPVNPNGSPEDPNCIKTTDQQGEEVNLFQPAKEFIPVIEEVYNNLVEITKCIKGAKVENHKFCTSVHYRNVDEKDWPLVAQRVHDHLKRYPRLRITHGRKVLEVRPVIEWNKGKAVEFLLESLGLSNNDEFLPIFIGDDKTDEDAFKVLREGNRGFGILVSSVPKESNAFYSLRDPSEVKKFLKTLVKWGKMESSKTSF.

The tract at residues 1–20 is disordered; sequence MDLNINKTTPVLSDPTTPVS.

It belongs to the trehalose phosphatase family. The cofactor is a divalent metal cation.

The enzyme catalyses alpha,alpha-trehalose 6-phosphate + H2O = alpha,alpha-trehalose + phosphate. Its pathway is glycan biosynthesis; trehalose biosynthesis. In terms of biological role, removes the phosphate from trehalose 6-phosphate to produce free trehalose. Trehalose accumulation in plant may improve abiotic stress tolerance. In Arabidopsis thaliana (Mouse-ear cress), this protein is Probable trehalose-phosphate phosphatase G (TPPG).